We begin with the raw amino-acid sequence, 103 residues long: Pyrimidine/purine nucleoside phosphorylase (103 aa).

The protein belongs to the nucleoside phosphorylase PpnP family.

The catalysed reaction is a purine D-ribonucleoside + phosphate = a purine nucleobase + alpha-D-ribose 1-phosphate. It catalyses the reaction adenosine + phosphate = alpha-D-ribose 1-phosphate + adenine. It carries out the reaction cytidine + phosphate = cytosine + alpha-D-ribose 1-phosphate. The enzyme catalyses guanosine + phosphate = alpha-D-ribose 1-phosphate + guanine. The catalysed reaction is inosine + phosphate = alpha-D-ribose 1-phosphate + hypoxanthine. It catalyses the reaction thymidine + phosphate = 2-deoxy-alpha-D-ribose 1-phosphate + thymine. It carries out the reaction uridine + phosphate = alpha-D-ribose 1-phosphate + uracil. The enzyme catalyses xanthosine + phosphate = alpha-D-ribose 1-phosphate + xanthine. Functionally, catalyzes the phosphorolysis of diverse nucleosides, yielding D-ribose 1-phosphate and the respective free bases. Can use uridine, adenosine, guanosine, cytidine, thymidine, inosine and xanthosine as substrates. Also catalyzes the reverse reactions. The protein is Pyrimidine/purine nucleoside phosphorylase of Geobacter sp. (strain M21).